A 459-amino-acid polypeptide reads, in one-letter code: MSSGQIVQIIGAVIDVEFPRDTVPKVYDALKVEGGATTLEVQQQLGDGIVRTIAMGSTEGLRRGLQVENTNAPISVPVGTQTLGRIMDVLGNPIDEKGPIGEEERMPIHRTAPGYADQSSSRDLLETGIKVIDLVCPFAKGGKVGLFGGAGVGKTVNMMELINNIAKEHSGLSVFAGVGERTREGNDFYYEMEESKVLDKVAMVYGQMNEPPGNRLRVALTGLTMAEKFRDEGRDVLLFVDNIYRYTLAGTEVSALLGRMPSAVGYQPTLAEEMGVLQERITSTKVGSITSVQAVYVPADDLTDPSPATTFSHLDATVVLSRDIAAKGIYPAIDPLDSTSRQLDPLVIGQEHYDVARGVQTVLQRYKELKDIIAILGMDELSEEDKQIVSRARKIERFLSQPFHVAEVFTGSPGKYVSLKDTIRGFKGILDGEFDHLPEQAFYMVGGIDEAVEKAKKTK.

148-155 is a binding site for ATP; sequence GGAGVGKT.

The protein belongs to the ATPase alpha/beta chains family. F-type ATPases have 2 components, CF(1) - the catalytic core - and CF(0) - the membrane proton channel. CF(1) has five subunits: alpha(3), beta(3), gamma(1), delta(1), epsilon(1). CF(0) has three main subunits: a(1), b(2) and c(9-12). The alpha and beta chains form an alternating ring which encloses part of the gamma chain. CF(1) is attached to CF(0) by a central stalk formed by the gamma and epsilon chains, while a peripheral stalk is formed by the delta and b chains.

The protein localises to the cell inner membrane. It carries out the reaction ATP + H2O + 4 H(+)(in) = ADP + phosphate + 5 H(+)(out). Produces ATP from ADP in the presence of a proton gradient across the membrane. The catalytic sites are hosted primarily by the beta subunits. This chain is ATP synthase subunit beta, found in Hahella chejuensis (strain KCTC 2396).